The primary structure comprises 621 residues: Frizzled and smoothened-like protein H (621 aa).

The N-terminal stretch at 1-21 (MNLKFYNLIFFISFLICCIHG) is a signal peptide. Residues 22 to 246 (QRYLPVEGGK…VWNQIFKIND (225 aa)) lie on the Extracellular side of the membrane. Positions 27–166 (VEGGKCEKYI…IEWVKYNLTI (140 aa)) constitute an FZ domain. Intrachain disulfides connect Cys32–Cys103 and Cys46–Cys96. Residues Asn60, Asn107, Asn163, Asn176, and Asn206 are each glycosylated (N-linked (GlcNAc...) asparagine). The helical transmembrane segment at 247-267 (VLSSISLACTLILLFTFGILN) threads the bilayer. The Cytoplasmic segment spans residues 268–277 (PKLNRFDKKN). The chain crosses the membrane as a helical span at residues 278–298 (LFFIAGVFGMSVSGVLIAANG). The Extracellular portion of the chain corresponds to 299-318 (SEKTVCPTPERYAVNTDRVC). Residues 319–339 (VASGFLVHFSALFAILWWTIG) traverse the membrane as a helical segment. Residues 340–359 (LADVYYGIKFVGKKIKIKVR) lie on the Cytoplasmic side of the membrane. Residues 360–380 (YYLLATLTISLAFTLVPLGTG) traverse the membrane as a helical segment. Over 381–400 (QYQAGLSNVMCFLKDEIYQS) the chain is Extracellular. Residues 401-421 (MTFFVPLGICLTMGTILMILV) traverse the membrane as a helical segment. The Cytoplasmic portion of the chain corresponds to 422–464 (MREIYVIVKSNSTSSSFSSSSSKSKSKSKSSDSISYLKLQVKP). The helical transmembrane segment at 465 to 485 (MLNIILFYFTFLYLFLFVRVI) threads the bilayer. Residues 486–520 (NSRYQEYEDSAIPYMLCLAKGGGDSCRLKGPSAGS) are Extracellular-facing. A helical transmembrane segment spans residues 521-541 (LGYFAYCLRIYGIYLFIISFL). Residues 542–621 (SSRTIKIWKE…RNYNTDDDDL (80 aa)) lie on the Cytoplasmic side of the membrane. Residues 575–594 (FSSSKNTSTTQNSTLNNTES) are compositionally biased toward low complexity. The disordered stretch occupies residues 575 to 603 (FSSSKNTSTTQNSTLNNTESDTSKRGNSS).

This sequence belongs to the G-protein coupled receptor Fz/Smo family.

Its subcellular location is the membrane. The polypeptide is Frizzled and smoothened-like protein H (fslH) (Dictyostelium discoideum (Social amoeba)).